The sequence spans 649 residues: Acetyl-coenzyme A synthetase (649 aa).

CoA contacts are provided by residues 191–194, Thr309, and Asn333; that span reads RGGR. ATP is bound by residues 385 to 387, 409 to 414, Asp498, and Arg513; these read GEP and DTWWQT. Ser521 contacts CoA. Arg524 contacts ATP. Residues Val535, His537, and Val540 each coordinate Mg(2+). Arg582 is a binding site for CoA. An N6-acetyllysine modification is found at Lys607.

The protein belongs to the ATP-dependent AMP-binding enzyme family. Requires Mg(2+) as cofactor. In terms of processing, acetylated. Deacetylation by the SIR2-homolog deacetylase activates the enzyme.

The enzyme catalyses acetate + ATP + CoA = acetyl-CoA + AMP + diphosphate. In terms of biological role, catalyzes the conversion of acetate into acetyl-CoA (AcCoA), an essential intermediate at the junction of anabolic and catabolic pathways. AcsA undergoes a two-step reaction. In the first half reaction, AcsA combines acetate with ATP to form acetyl-adenylate (AcAMP) intermediate. In the second half reaction, it can then transfer the acetyl group from AcAMP to the sulfhydryl group of CoA, forming the product AcCoA. In Novosphingobium aromaticivorans (strain ATCC 700278 / DSM 12444 / CCUG 56034 / CIP 105152 / NBRC 16084 / F199), this protein is Acetyl-coenzyme A synthetase.